The sequence spans 250 residues: MQICLIDETGTGDGALSVLATRWGLEHDEDNLMALVLTPEHLELRKRDEPKLGGIFVDFVGGAMAHRRKFGGGRGEAVAKAVGIKGDYLPDVVDATAGLGRDAFVLASVGCRVRMLERNPVVAALLDDGLARGYADAEIGGWLQERLQLIHASSLTALTDITPRPQVVYLDPMFPHKQKSALVKKEMRVFQSLVGPDLDADGLLEPARLLASKRVVVKRPDYAPPLANVATPNAVVTKGHRFDIYAGTPV.

Residues 101–102 (RD), 117–118 (ER), 153–154 (SS), and D171 each bind S-adenosyl-L-methionine.

It belongs to the methyltransferase superfamily. RsmJ family.

It localises to the cytoplasm. The enzyme catalyses guanosine(1516) in 16S rRNA + S-adenosyl-L-methionine = N(2)-methylguanosine(1516) in 16S rRNA + S-adenosyl-L-homocysteine + H(+). Its function is as follows. Specifically methylates the guanosine in position 1516 of 16S rRNA. The polypeptide is Ribosomal RNA small subunit methyltransferase J (Shigella dysenteriae serotype 1 (strain Sd197)).